A 542-amino-acid chain; its full sequence is Chaperonin GroEL (542 aa).

Residues 30-33, K51, 87-91, G415, 480-482, and D496 contribute to the ATP site; these read TLGP, DGTTT, and NAA.

The protein belongs to the chaperonin (HSP60) family. As to quaternary structure, forms a cylinder of 14 subunits composed of two heptameric rings stacked back-to-back. Interacts with the co-chaperonin GroES.

The protein localises to the cytoplasm. The enzyme catalyses ATP + H2O + a folded polypeptide = ADP + phosphate + an unfolded polypeptide.. In terms of biological role, together with its co-chaperonin GroES, plays an essential role in assisting protein folding. The GroEL-GroES system forms a nano-cage that allows encapsulation of the non-native substrate proteins and provides a physical environment optimized to promote and accelerate protein folding. This chain is Chaperonin GroEL, found in Tremblaya princeps.